A 118-amino-acid polypeptide reads, in one-letter code: Secreted RxLR effector protein 143 (118 aa).

Residues 1-18 (MRHCAFLFRLFLIGYSCS) form the signal peptide. Basic and acidic residues predominate over residues 35-65 (DELPRAEQWDSDGKRILQADDPEHIPTEERG). The segment at 35–66 (DELPRAEQWDSDGKRILQADDPEHIPTEERGI) is disordered. The short motif at 49-64 (RILQADDPEHIPTEER) is the RxLR-dEER element.

The protein belongs to the RxLR effector family.

The protein localises to the secreted. It is found in the host cell membrane. Secreted effector that completely suppresses the host cell death induced by cell death-inducing proteins. The protein is Secreted RxLR effector protein 143 of Plasmopara viticola (Downy mildew of grapevine).